The chain runs to 125 residues: Photoactive yellow protein (125 aa).

Residues 23-86 form the PAS domain; it reads LNQLAFGAIQ…GRFKEGVANG (64 aa). Cys-69 is modified (S-(4-hydroxycinnamyl)cysteine).

Belongs to the photoactive yellow protein family. The 4-hydroxycinnamic acid (p-coumaric acid) chromophore is covalently bound via a thioester linkage.

Functionally, photoactive blue light protein. Probably functions as a photoreceptor for a negative phototaxis response. The sequence is that of Photoactive yellow protein (pyp) from Halochromatium salexigens (Chromatium salexigens).